The chain runs to 331 residues: Aldo-keto reductase family 7 member A3 (331 aa).

Ser-6 bears the Phosphoserine mark. NADPH is bound by residues Met-17, Asp-44, and Tyr-49. Tyr-49 functions as the Proton donor in the catalytic mechanism. Position 85 is a phosphoserine (Ser-85). Residues His-113, Ser-143, Asn-144, Asn-198, Leu-200, Gly-202, Lys-208, Tyr-209, and Arg-222 each coordinate NADPH. Thr-227 bears the Phosphothreonine mark. Residues Ser-290, Gln-294, and Asn-298 each coordinate NADPH.

Belongs to the aldo/keto reductase family. Aldo/keto reductase 2 subfamily. Homodimer. As to expression, expressed in colon, kidney, liver, pancreas, adenocarcinoma and endometrium.

It localises to the cytoplasm. It carries out the reaction a primary alcohol + NADP(+) = an aldehyde + NADPH + H(+). The enzyme catalyses aflatoxin B1 dialdehyde + NADPH + H(+) = aflatoxin B1 C(6a)-monoaldehyde + NADP(+). The catalysed reaction is aflatoxin B1 dialdehyde + NADPH + H(+) = aflatoxin B1 C(8)-monoaldehyde + NADP(+). It catalyses the reaction aflatoxin B1 C(6a)-monoaldehyde + NADPH + 2 H(+) = aflatoxin B1 triol + NADP(+). Inhibited by citrate. Its function is as follows. Catalyzes the NADPH-dependent reduction of various carbonyl-containing compounds, including aldehydes, ketones, and toxic products from cellular metabolism or environmental exposure. Can reduce the dialdehyde form of aflatoxin B1 (AFB1) into alcohol derivatives, via monoaldehydes intermediates. Can reduce the dialdehyde form of aflatoxin B1 (AFB1) into alcohol derivatives, via monoaldehydes intermediates, thus preventing the formation of protein adducts that contribute to AFB1-induced toxicity. This is Aldo-keto reductase family 7 member A3 from Homo sapiens (Human).